The following is a 699-amino-acid chain: Elongation factor G (699 aa).

The tr-type G domain maps to 8–288; it reads EDYRNFGIMA…AVVDYLPSPV (281 aa). Residues 17–24, 86–90, and 140–143 contribute to the GTP site; these read AHIDAGKT, DTPGH, and NKMD.

This sequence belongs to the TRAFAC class translation factor GTPase superfamily. Classic translation factor GTPase family. EF-G/EF-2 subfamily.

The protein resides in the cytoplasm. In terms of biological role, catalyzes the GTP-dependent ribosomal translocation step during translation elongation. During this step, the ribosome changes from the pre-translocational (PRE) to the post-translocational (POST) state as the newly formed A-site-bound peptidyl-tRNA and P-site-bound deacylated tRNA move to the P and E sites, respectively. Catalyzes the coordinated movement of the two tRNA molecules, the mRNA and conformational changes in the ribosome. This Sinorhizobium medicae (strain WSM419) (Ensifer medicae) protein is Elongation factor G.